A 211-amino-acid chain; its full sequence is Beta-crystallin B3 (211 aa).

M1 carries the N-acetylmethionine modification. An N-acetylalanine; in Beta-crystallin B3, N-terminally processed modification is found at A2. Positions 2–23 (AEQHGAPEQAAASKSHGGLGGS) are N-terminal arm. 2 Beta/gamma crystallin 'Greek key' domains span residues 24–63 (YKVTVYELENFQGKRCELSAECPNLTESLLQKVGSIQVES) and 64–108 (GPWL…RPLH). Positions 109–113 (IDGPD) are connecting peptide. 2 Beta/gamma crystallin 'Greek key' domains span residues 114–155 (HKLH…RVIN) and 156–198 (GTWV…RRIR). A C-terminal arm region spans residues 200-211 (QKWHKRGCFLSS).

It belongs to the beta/gamma-crystallin family. Homo/heterodimer, or complexes of higher-order. The structure of beta-crystallin oligomers seems to be stabilized through interactions between the N-terminal arms.

Its function is as follows. Crystallins are the dominant structural components of the vertebrate eye lens. The polypeptide is Beta-crystallin B3 (Crybb3) (Rattus norvegicus (Rat)).